A 362-amino-acid polypeptide reads, in one-letter code: Bifunctional chorismate mutase/prephenate dehydratase (362 aa).

The region spanning 1–92 (MEELKELRKE…ACLSLEKKIK (92 aa)) is the Chorismate mutase domain. Arginine 8, arginine 25, lysine 36, and glutamate 49 together coordinate substrate. One can recognise a Prephenate dehydratase domain in the interval 93 to 267 (VAYLGPKATF…NFTRFLVIAK (175 aa)). An ACT domain is found at 279–356 (SILFGVKDEP…QFLKVLGSYP (78 aa)).

Its subcellular location is the cytoplasm. The enzyme catalyses chorismate = prephenate. It catalyses the reaction prephenate + H(+) = 3-phenylpyruvate + CO2 + H2O. It participates in amino-acid biosynthesis; L-phenylalanine biosynthesis; phenylpyruvate from prephenate: step 1/1. The protein operates within metabolic intermediate biosynthesis; prephenate biosynthesis; prephenate from chorismate: step 1/1. Its function is as follows. Catalyzes the Claisen rearrangement of chorismate to prephenate and the decarboxylation/dehydration of prephenate to phenylpyruvate. The polypeptide is Bifunctional chorismate mutase/prephenate dehydratase (pheA) (Aquifex aeolicus (strain VF5)).